The following is a 95-amino-acid chain: MTIRPLHDRVVVKRLEAEEKTASGIVLPGAAAEKPDMGEVIAVGAGKIGKDGARRPLDVKVGDKIIFGKYSGQTVKADGEELLVMREEDIFGIVE.

It belongs to the GroES chaperonin family. As to quaternary structure, heptamer of 7 subunits arranged in a ring. Interacts with the chaperonin GroEL.

Its subcellular location is the cytoplasm. Together with the chaperonin GroEL, plays an essential role in assisting protein folding. The GroEL-GroES system forms a nano-cage that allows encapsulation of the non-native substrate proteins and provides a physical environment optimized to promote and accelerate protein folding. GroES binds to the apical surface of the GroEL ring, thereby capping the opening of the GroEL channel. The sequence is that of Co-chaperonin GroES from Neisseria meningitidis serogroup C (strain 053442).